The sequence spans 386 residues: Adiponectin receptor protein 2 (386 aa).

A disordered region spans residues 1 to 71; the sequence is MNEPTENRLG…HEYSDEAPQE (71 aa). The Cytoplasmic segment spans residues 1 to 147; it reads MNEPTENRLG…SIFRIHTETG (147 aa). Positions 15-41 are enriched in basic and acidic residues; the sequence is PEPDIRLRKGHQLDGTRRGDNDSHQGD. A helical transmembrane segment spans residues 148 to 168; the sequence is NIWTHLLGCVFFLCLGIFYMF. The Extracellular segment spans residues 169–181; that stretch reads RPNISFVAPLQEK. A helical membrane pass occupies residues 182-202; that stretch reads VVFGLFFLGAILCLSFSWLFH. Histidine 202 is a binding site for Zn(2+). At 203–213 the chain is on the cytoplasmic side; the sequence is TVYCHSEGVSR. The helical transmembrane segment at 214 to 234 threads the bilayer; it reads LFSKLDYSGIALLIMGSFVPW. Topologically, residues 235–245 are extracellular; it reads LYYSFYCNPQP. Residues 246–266 form a helical membrane-spanning segment; the sequence is CFIYLIVICVLGIAAIIVSQW. Residues 267–273 lie on the Cytoplasmic side of the membrane; sequence DMFATPQ. A helical membrane pass occupies residues 274–294; that stretch reads YRGVRAGVFLGLGLSGIIPTL. Topologically, residues 295 to 309 are extracellular; sequence HYVISEGFLKAATIG. Residues 310-330 traverse the membrane as a helical segment; the sequence is QIGWLMLMASLYITGAALYAA. Residues 331 to 348 lie on the Cytoplasmic side of the membrane; the sequence is RIPERFFPGKCDIWFHSH. Histidine 348 and histidine 352 together coordinate Zn(2+). Residues 349 to 369 form a helical membrane-spanning segment; the sequence is QLFHIFVVAGAFVHFHGVSNL. Residues 370–386 are Extracellular-facing; sequence QEFRFMIGGGCSEEDAL.

Belongs to the ADIPOR family. In terms of assembly, may form homooligomers and heterooligomers with ADIPOR1. Interacts with APPL2 (via BAR domain); ADIPOQ dissociates this interaction. Ubiquitous. Highly expressed in skeletal muscle, liver and placenta. Weakly expressed in brain, heart, colon, spleen, kidney, thymus, small intestine, peripheral blood leukocytes and lung.

It localises to the cell membrane. Receptor for ADIPOQ, an essential hormone secreted by adipocytes that regulates glucose and lipid metabolism. Required for normal body fat and glucose homeostasis. ADIPOQ-binding activates a signaling cascade that leads to increased PPARA activity, and ultimately to increased fatty acid oxidation and glucose uptake. Has intermediate affinity for globular and full-length adiponectin. Required for normal revascularization after chronic ischemia caused by severing of blood vessels. The protein is Adiponectin receptor protein 2 of Homo sapiens (Human).